Reading from the N-terminus, the 458-residue chain is GEAGRDGMGDTGRDSRSPDSSSPNPLSQGIPPSSPPGPPHTPSAPPPPMPPPPLGSPFPVISSSMGSPGLPPPAPPGFSGPVSSPQINSTVSLPGGGSGPPEDVKPPVLGVRGLHCPPPPGGPGAGKRLCAICGDRSSGKHYGVYSCEGCKGFFKRTIRKDLTYSCRDNKDCTVDKRQRNRCQYCRYQKCLATGMKREAVQEERQRGKDKDGDGDGAGGAPEEMPVDRILEAELAVEQKSDQGVEGPGATGGGGSSPNDPVTNICQAADKQLFTLVEWAKRIPHFSSLPLDDQVILLRAGWNELLIASFSHRSIDVRDGILLATGLHVHRNSAHSAGVGAIFDRVLTELVSKMRDMRMDKTELGCLRAIILFNPDAKGLSNPGEVEILREKVYASLETYCKQKYPEQQGRFAKLLLRLPALRSIGLKCLEHLFFFKLIGDTPIDTFLMEMLEAPHQLA.

The segment covering 1–17 (GEAGRDGMGDTGRDSRS) has biased composition (basic and acidic residues). Residues 1–105 (GEAGRDGMGD…GGSGPPEDVK (105 aa)) form a disordered region. The tract at residues 1-129 (GEAGRDGMGD…PGGPGAGKRL (129 aa)) is modulating. A compositionally biased stretch (low complexity) spans 18–31 (PDSSSPNPLSQGIP). Positions 32-56 (PSSPPGPPHTPSAPPPPMPPPPLGS) are enriched in pro residues. Over residues 57–68 (PFPVISSSMGSP) the composition is skewed to low complexity. The segment covering 69–78 (GLPPPAPPGF) has biased composition (pro residues). NR C4-type zinc fingers lie at residues 130–150 (CAIC…CEGC) and 166–190 (CRDN…YQKC). The nuclear receptor DNA-binding region spans 130–195 (CAICGDRSSG…RYQKCLATGM (66 aa)). The tract at residues 196–220 (KREAVQEERQRGKDKDGDGDGAGGA) is hinge. A compositionally biased stretch (basic and acidic residues) spans 201–213 (QEERQRGKDKDGD). Disordered regions lie at residues 201-223 (QEER…APEE) and 238-261 (QKSD…NDPV). The NR LBD domain occupies 221–454 (PEEMPVDRIL…TFLMEMLEAP (234 aa)). Positions 245-255 (EGPGATGGGGS) are enriched in gly residues.

Belongs to the nuclear hormone receptor family. NR2 subfamily. In terms of assembly, homodimer (in vitro). Heterodimer with other retinoic acid receptor family members. Binds DNA preferentially as a RAR/RXR heterodimer. Interacts with NR1H3. Interacts with AKAP13. Expressed in the adrenal gland with main expression in the zona fasciculata (at protein level).

It is found in the nucleus. It localises to the cytoplasm. Its function is as follows. Receptor for retinoic acid. Retinoic acid receptors bind as heterodimers to their target response elements in response to their ligands, all-trans or 9-cis retinoic acid, and regulate gene expression in various biological processes. The RAR/RXR heterodimers bind to the retinoic acid response elements (RARE). The polypeptide is Retinoic acid receptor RXR-beta (Rxrb) (Rattus norvegicus (Rat)).